The primary structure comprises 302 residues: Pantothenate synthetase (302 aa).

30–37 (MGALHGGH) contributes to the ATP binding site. Residue histidine 37 is the Proton donor of the active site. A (R)-pantoate-binding site is contributed by glutamine 61. A beta-alanine-binding site is contributed by glutamine 61. 147–150 (GEKD) serves as a coordination point for ATP. Residue glutamine 153 coordinates (R)-pantoate. ATP contacts are provided by residues valine 176 and 184–187 (KSSR).

Belongs to the pantothenate synthetase family. Homodimer.

The protein resides in the cytoplasm. The enzyme catalyses (R)-pantoate + beta-alanine + ATP = (R)-pantothenate + AMP + diphosphate + H(+). Its pathway is cofactor biosynthesis; (R)-pantothenate biosynthesis; (R)-pantothenate from (R)-pantoate and beta-alanine: step 1/1. Catalyzes the condensation of pantoate with beta-alanine in an ATP-dependent reaction via a pantoyl-adenylate intermediate. This Shouchella clausii (strain KSM-K16) (Alkalihalobacillus clausii) protein is Pantothenate synthetase.